Here is a 145-residue protein sequence, read N- to C-terminus: Large ribosomal subunit protein uL11 (145 aa).

It belongs to the universal ribosomal protein uL11 family. As to quaternary structure, part of the ribosomal stalk of the 50S ribosomal subunit. Interacts with L10 and the large rRNA to form the base of the stalk. L10 forms an elongated spine to which L12 dimers bind in a sequential fashion forming a multimeric L10(L12)X complex. In terms of processing, one or more lysine residues are methylated.

Functionally, forms part of the ribosomal stalk which helps the ribosome interact with GTP-bound translation factors. In Flavobacterium johnsoniae (strain ATCC 17061 / DSM 2064 / JCM 8514 / BCRC 14874 / CCUG 350202 / NBRC 14942 / NCIMB 11054 / UW101) (Cytophaga johnsonae), this protein is Large ribosomal subunit protein uL11.